Here is a 306-residue protein sequence, read N- to C-terminus: tRNA pseudouridine synthase B (306 aa).

Catalysis depends on Asp47, which acts as the Nucleophile.

Belongs to the pseudouridine synthase TruB family. Type 1 subfamily.

It carries out the reaction uridine(55) in tRNA = pseudouridine(55) in tRNA. In terms of biological role, responsible for synthesis of pseudouridine from uracil-55 in the psi GC loop of transfer RNAs. This chain is tRNA pseudouridine synthase B, found in Neisseria meningitidis serogroup A / serotype 4A (strain DSM 15465 / Z2491).